The following is a 307-amino-acid chain: Acyl transferase (307 aa).

Active-site charge relay system residues include serine 116, aspartate 213, and histidine 243.

This sequence belongs to the LuxD family.

The protein operates within lipid metabolism; fatty acid reduction for biolumincescence. In terms of biological role, acyl transferase is part of the fatty acid reductase system required for aldehyde biosynthesis; it produces fatty acids for the luminescent reaction. The polypeptide is Acyl transferase (Photorhabdus luminescens (Xenorhabdus luminescens)).